Reading from the N-terminus, the 509-residue chain is ATP synthase subunit alpha (509 aa).

169-176 (GDRQTGKT) is a binding site for ATP.

It belongs to the ATPase alpha/beta chains family. As to quaternary structure, F-type ATPases have 2 components, CF(1) - the catalytic core - and CF(0) - the membrane proton channel. CF(1) has five subunits: alpha(3), beta(3), gamma(1), delta(1), epsilon(1). CF(0) has three main subunits: a(1), b(2) and c(9-12). The alpha and beta chains form an alternating ring which encloses part of the gamma chain. CF(1) is attached to CF(0) by a central stalk formed by the gamma and epsilon chains, while a peripheral stalk is formed by the delta and b chains.

It is found in the cell inner membrane. The enzyme catalyses ATP + H2O + 4 H(+)(in) = ADP + phosphate + 5 H(+)(out). Produces ATP from ADP in the presence of a proton gradient across the membrane. The alpha chain is a regulatory subunit. The chain is ATP synthase subunit alpha from Sinorhizobium fredii (strain NBRC 101917 / NGR234).